Here is a 429-residue protein sequence, read N- to C-terminus: Glutamate-1-semialdehyde 2,1-aminomutase 2 (429 aa).

K268 bears the N6-(pyridoxal phosphate)lysine mark.

This sequence belongs to the class-III pyridoxal-phosphate-dependent aminotransferase family. HemL subfamily. In terms of assembly, homodimer. Pyridoxal 5'-phosphate is required as a cofactor.

Its subcellular location is the cytoplasm. It catalyses the reaction (S)-4-amino-5-oxopentanoate = 5-aminolevulinate. It participates in porphyrin-containing compound metabolism; protoporphyrin-IX biosynthesis; 5-aminolevulinate from L-glutamyl-tRNA(Glu): step 2/2. This Bacillus cereus (strain B4264) protein is Glutamate-1-semialdehyde 2,1-aminomutase 2.